We begin with the raw amino-acid sequence, 149 residues long: Calmodulin (149 aa).

At Ala-2 the chain carries N-acetylalanine. 4 EF-hand domains span residues 8–43 (EQIA…LGQN), 44–79 (PTEA…KMKD), 81–116 (DSEE…LGEK), and 117–149 (LTDE…MTSK). Ca(2+) contacts are provided by Asp-21, Asp-23, Asp-25, Thr-27, Glu-32, Asp-57, Asp-59, Asp-61, Thr-63, Glu-68, Asp-94, Asp-96, Asp-98, and Glu-105. N6,N6,N6-trimethyllysine is present on Lys-116. Ca(2+)-binding residues include Asp-130, Asp-132, Asp-134, Gln-136, and Glu-141.

Belongs to the calmodulin family.

In terms of biological role, calmodulin mediates the control of a large number of enzymes, ion channels and other proteins by Ca(2+). Among the enzymes to be stimulated by the calmodulin-Ca(2+) complex are a number of protein kinases and phosphatases. The sequence is that of Calmodulin from Renilla reniformis (Sea pansy).